The chain runs to 284 residues: D-tagatose-1,6-bisphosphate aldolase subunit GatY (284 aa).

Catalysis depends on aspartate 82, which acts as the Proton donor. Residues histidine 83 and histidine 180 each coordinate Zn(2+). Glycine 181 provides a ligand contact to dihydroxyacetone phosphate. Histidine 208 serves as a coordination point for Zn(2+). Dihydroxyacetone phosphate contacts are provided by residues 209–211 (GAS) and 230–233 (NVAT).

It belongs to the class II fructose-bisphosphate aldolase family. TagBP aldolase GatY subfamily. In terms of assembly, forms a complex with GatZ. Requires Zn(2+) as cofactor.

It catalyses the reaction D-tagatofuranose 1,6-bisphosphate = D-glyceraldehyde 3-phosphate + dihydroxyacetone phosphate. It functions in the pathway carbohydrate metabolism; D-tagatose 6-phosphate degradation; D-glyceraldehyde 3-phosphate and glycerone phosphate from D-tagatose 6-phosphate: step 2/2. Its function is as follows. Catalytic subunit of the tagatose-1,6-bisphosphate aldolase GatYZ, which catalyzes the reversible aldol condensation of dihydroxyacetone phosphate (DHAP or glycerone-phosphate) with glyceraldehyde 3-phosphate (G3P) to produce tagatose 1,6-bisphosphate (TBP). Requires GatZ subunit for full activity and stability. Is involved in the catabolism of galactitol. The protein is D-tagatose-1,6-bisphosphate aldolase subunit GatY of Salmonella paratyphi B (strain ATCC BAA-1250 / SPB7).